Reading from the N-terminus, the 184-residue chain is Ribosome-recycling factor (184 aa).

It belongs to the RRF family.

It localises to the cytoplasm. Functionally, responsible for the release of ribosomes from messenger RNA at the termination of protein biosynthesis. May increase the efficiency of translation by recycling ribosomes from one round of translation to another. The polypeptide is Ribosome-recycling factor (Aquifex aeolicus (strain VF5)).